A 361-amino-acid polypeptide reads, in one-letter code: Peptide chain release factor 1 (361 aa).

The residue at position 237 (Gln-237) is an N5-methylglutamine. The span at 285-296 (DEKRRSAEESTR) shows a compositional bias: basic and acidic residues. Residues 285–305 (DEKRRSAEESTRRNLVGSGDR) are disordered.

The protein belongs to the prokaryotic/mitochondrial release factor family. Methylated by PrmC. Methylation increases the termination efficiency of RF1.

The protein localises to the cytoplasm. Peptide chain release factor 1 directs the termination of translation in response to the peptide chain termination codons UAG and UAA. This Shewanella sediminis (strain HAW-EB3) protein is Peptide chain release factor 1.